A 188-amino-acid chain; its full sequence is Probable nicotinate-nucleotide adenylyltransferase (188 aa).

It belongs to the NadD family.

It carries out the reaction nicotinate beta-D-ribonucleotide + ATP + H(+) = deamido-NAD(+) + diphosphate. The protein operates within cofactor biosynthesis; NAD(+) biosynthesis; deamido-NAD(+) from nicotinate D-ribonucleotide: step 1/1. Its function is as follows. Catalyzes the reversible adenylation of nicotinate mononucleotide (NaMN) to nicotinic acid adenine dinucleotide (NaAD). The polypeptide is Probable nicotinate-nucleotide adenylyltransferase (Listeria monocytogenes serotype 4b (strain F2365)).